Here is a 488-residue protein sequence, read N- to C-terminus: 1-aminocyclopropane-1-carboxylate synthase-like protein 1 (488 aa).

K273 carries the N6-(pyridoxal phosphate)lysine modification.

This sequence belongs to the class-I pyridoxal-phosphate-dependent aminotransferase family. In terms of assembly, homodimer. As to expression, expressed in young leaves and flowers. Not expressed in roots.

The polypeptide is 1-aminocyclopropane-1-carboxylate synthase-like protein 1 (ACS1) (Arabidopsis thaliana (Mouse-ear cress)).